The sequence spans 87 residues: Serine protease inhibitor Kazal-type 12 (87 aa).

An N-terminal signal peptide occupies residues 1–22 (MKPAGAFLLLISLACLFLSVDA). The Kazal-like domain maps to 26–87 (GGFQAFCSNY…KLGFKHEGKC (62 aa)). 3 disulfide bridges follow: Cys32/Cys68, Cys46/Cys65, and Cys54/Cys87.

As to expression, expressed in epydiymis, in the caput.

The protein resides in the secreted. In terms of biological role, inhibits trypsin. The sequence is that of Serine protease inhibitor Kazal-type 12 (Spink12) from Mus musculus (Mouse).